The chain runs to 116 residues: MKKQNLVSFPENLEAMRKFSETYAKRTGTFFCIDSSVTAVVIEGLARHKDQYGAPLCPCRHYEDKKAEISATYWNCPCVPMRERRECHCMLFLTPDNEFASDLQEIDKTTLTEQIS.

Residue C57 participates in [4Fe-4S] cluster binding. The active-site Nucleophile is C59. The cysteines at positions 59 and 89 are disulfide-linked. [4Fe-4S] cluster contacts are provided by C76, C78, and C87.

The protein belongs to the ferredoxin thioredoxin reductase beta subunit family. Heterodimer of subunit A (variable subunit) and subunit B (catalytic subunit). Heterodimeric FTR forms a complex with ferredoxin and thioredoxin. [4Fe-4S] cluster is required as a cofactor.

It is found in the plastid. The protein resides in the chloroplast. The enzyme catalyses [thioredoxin]-disulfide + 2 reduced [2Fe-2S]-[ferredoxin] + 2 H(+) = [thioredoxin]-dithiol + 2 oxidized [2Fe-2S]-[ferredoxin]. Catalytic subunit of the ferredoxin-thioredoxin reductase (FTR), which catalyzes the two-electron reduction of thioredoxins by the electrons provided by reduced ferredoxin. The polypeptide is Ferredoxin-thioredoxin reductase, catalytic chain (ftrB) (Pyropia yezoensis (Susabi-nori)).